A 179-amino-acid chain; its full sequence is UPF0302 protein EF_1554 (179 aa).

Belongs to the UPF0302 family.

In Enterococcus faecalis (strain ATCC 700802 / V583), this protein is UPF0302 protein EF_1554.